We begin with the raw amino-acid sequence, 170 residues long: 3-hydroxydecanoyl-[acyl-carrier-protein] dehydratase (170 aa).

Histidine 71 is a catalytic residue.

It belongs to the thioester dehydratase family. FabA subfamily. As to quaternary structure, homodimer.

It localises to the cytoplasm. The enzyme catalyses a (3R)-hydroxyacyl-[ACP] = a (2E)-enoyl-[ACP] + H2O. It carries out the reaction (3R)-hydroxydecanoyl-[ACP] = (2E)-decenoyl-[ACP] + H2O. The catalysed reaction is (2E)-decenoyl-[ACP] = (3Z)-decenoyl-[ACP]. The protein operates within lipid metabolism; fatty acid biosynthesis. In terms of biological role, necessary for the introduction of cis unsaturation into fatty acids. Catalyzes the dehydration of (3R)-3-hydroxydecanoyl-ACP to E-(2)-decenoyl-ACP and then its isomerization to Z-(3)-decenoyl-ACP. Can catalyze the dehydratase reaction for beta-hydroxyacyl-ACPs with saturated chain lengths up to 16:0, being most active on intermediate chain length. The sequence is that of 3-hydroxydecanoyl-[acyl-carrier-protein] dehydratase from Chelativorans sp. (strain BNC1).